The primary structure comprises 630 residues: Probable potassium transport system protein Kup (630 aa).

The next 12 helical transmembrane spans lie at 17–37 (LAIA…LYSL), 51–71 (PSAI…VVGI), 105–125 (ITGL…GDAV), 144–164 (PQLS…LFWI), 175–195 (LFGP…IYHI), 218–238 (VLLA…AEAL), 255–275 (YVLV…LLLL), 283–303 (PFFL…STVA), 344–364 (IYVP…VIGF), 374–394 (YGIA…VVMV), 402–422 (LLVA…FGAN), and 428–448 (QGGW…MTWY).

It belongs to the HAK/KUP transporter (TC 2.A.72) family.

It is found in the cell inner membrane. It catalyses the reaction K(+)(in) + H(+)(in) = K(+)(out) + H(+)(out). In terms of biological role, transport of potassium into the cell. Likely operates as a K(+):H(+) symporter. The protein is Probable potassium transport system protein Kup of Burkholderia mallei (strain NCTC 10247).